Reading from the N-terminus, the 396-residue chain is RNA-binding motif protein, X chromosome (396 aa).

Met1 carries the post-translational modification N-acetylmethionine; in Heterogeneous nuclear ribonucleoprotein G; alternate. Val2 bears the N-acetylvaline; in Heterogeneous nuclear ribonucleoprotein G, N-terminally processed mark. The 79-residue stretch at 8 to 86 folds into the RRM domain; the sequence is GKLFIGGLNL…KAIKVAQATK (79 aa). A Glycyl lysine isopeptide (Lys-Gly) (interchain with G-Cter in SUMO2) cross-link involves residue Lys22. At Lys30 the chain carries N6-acetyllysine. Glycyl lysine isopeptide (Lys-Gly) (interchain with G-Cter in SUMO2) cross-links involve residues Lys80 and Lys86. The interval 84–396 is disordered; sequence ATKPAFESGR…RGGGGGRSRY (313 aa). A Phosphoserine modification is found at Ser91. An omega-N-methylarginine mark is found at Arg122, Arg141, Arg162, and Arg170. The segment covering 148 to 162 has biased composition (pro residues); the sequence is RGPPPPRRAGPPPKR. Composition is skewed to basic and acidic residues over residues 185–205 and 241–275; these read RGRD…RRDP and YTYR…DYAD. The interval 186 to 236 is necessary for the association to nascent RNAPII transcripts and nuclear localization; that stretch reads GRDGYEGPPRRDPPPPRRDPYLGSREGGYSPRDGYSSRDYSSARDARDFAP. Gly residues predominate over residues 323–332; the sequence is YGGGRDGYAG. Over residues 334–350 the composition is skewed to basic and acidic residues; sequence RSERYSGGRDRVGRADR. 2 positions are modified to phosphoserine: Ser335 and Ser355. Residues 336–396 form a necessary for RNA-binding region; sequence ERYSGGRDRV…RGGGGGRSRY (61 aa).

Homomultimer. Found in the supraspliceosome complex. Identified in the spliceosome C complex. Forms a complex with ILF2, ILF3, YLPM1, KHDRBS1, NCOA5 and PPP1CA. Interacts with CLK2, KHDRBS2, KHDRBS3, SAFB/SAFB1, TRA2B and YTHDC1. Interacts with ERAP1; the interaction is RNA-independent. In terms of processing, O-glycosylated. Post-translationally, arg-185 is dimethylated, probably to asymmetric dimethylarginine.

The protein resides in the nucleus. In terms of biological role, RNA-binding protein that plays several role in the regulation of pre- and post-transcriptional processes. Implicated in tissue-specific regulation of gene transcription and alternative splicing of several pre-mRNAs. Binds to and stimulates transcription from the tumor suppressor TXNIP gene promoter; may thus be involved in tumor suppression. When associated with SAFB, binds to and stimulates transcription from the SREBF1 promoter. Associates with nascent mRNAs transcribed by RNA polymerase II. Component of the supraspliceosome complex that regulates pre-mRNA alternative splice site selection. Can either activate or suppress exon inclusion; acts additively with TRA2B to promote exon 7 inclusion of the survival motor neuron SMN2. Represses the splicing of MAPT/Tau exon 10. Binds preferentially to single-stranded 5'-CC[A/C]-rich RNA sequence motifs localized in a single-stranded conformation; probably binds RNA as a homodimer. Binds non-specifically to pre-mRNAs. Also plays a role in the cytoplasmic TNFR1 trafficking pathways; promotes both the IL-1-beta-mediated inducible proteolytic cleavage of TNFR1 ectodomains and the release of TNFR1 exosome-like vesicles to the extracellular compartment. The chain is RNA-binding motif protein, X chromosome (RBMX) from Bos taurus (Bovine).